Consider the following 572-residue polypeptide: Methionine--tRNA ligase (572 aa).

The 'HIGH' region signature appears at 11–21; the sequence is PYINGIKHLGN. Cysteine 143, cysteine 146, cysteine 156, and cysteine 159 together coordinate Zn(2+). Positions 346–350 match the 'KMSKS' region motif; the sequence is QFSTS. Threonine 349 serves as a coordination point for ATP.

The protein belongs to the class-I aminoacyl-tRNA synthetase family. MetG type 1 subfamily. In terms of assembly, monomer. Zn(2+) serves as cofactor.

Its subcellular location is the cytoplasm. It carries out the reaction tRNA(Met) + L-methionine + ATP = L-methionyl-tRNA(Met) + AMP + diphosphate. Functionally, is required not only for elongation of protein synthesis but also for the initiation of all mRNA translation through initiator tRNA(fMet) aminoacylation. This Ruegeria pomeroyi (strain ATCC 700808 / DSM 15171 / DSS-3) (Silicibacter pomeroyi) protein is Methionine--tRNA ligase.